Reading from the N-terminus, the 552-residue chain is Cation/acetate symporter ActP (552 aa).

The next 14 helical transmembrane spans lie at 5 to 25 (FMMLFGLLTLPVLAWAADALT), 35 to 55 (IQAIVMFLLFVGGTLYITYWA), 78 to 98 (GLAIAGDYMSAASFLGISALV), 105 to 125 (GLIYSLGFLVGWPIILFLIAE), 151 to 171 (LSACGSLVVVALYLIAQMVGA), 185 to 205 (VAVILVGILMVMYVMFGGMLA), 208 to 228 (WVQIIKAVLLLFGATFMAVMV), 264 to 284 (ISALSLGLGLMFGTAGLPHIL), 305 to 325 (GFMGYFYFLTFIIGFGAILLV), 357 to 377 (FFLGFISAVAFATILAVVAGL), 407 to 427 (VSKITVLVLGVVAISLGILFE), 431 to 451 (IAFMVGLAFSIAASCNFPIII), 466 to 486 (IGGWAGLLTAVILMILGPTIW), and 499 to 519 (YDYPALFSMLVAFIGIWFFSI).

Belongs to the sodium:solute symporter (SSF) (TC 2.A.21) family.

The protein resides in the cell inner membrane. In terms of biological role, transports acetate. The polypeptide is Cation/acetate symporter ActP (Pectobacterium carotovorum subsp. carotovorum (strain PC1)).